We begin with the raw amino-acid sequence, 1052 residues long: Carboxylic acid reductase (1052 aa).

Residues 21 to 344 (RALNEPNREW…ATEFTPFPFY (324 aa)) form an adenylation (A) domain region. AMP contacts are provided by residues 334-335 (SA), Thr-339, and 419-422 (YQGR). One can recognise a Carrier domain in the interval 560–643 (SSSDALIVSI…RLADYLLSIV (84 aa)). Ser-595 bears the O-(pantetheine 4'-phosphoryl)serine mark. The tract at residues 684–979 (GQVVVITGTT…QKIVPLDEWL (296 aa)) is carboxylic acid reductase (R) domain. NADP(+)-binding positions include 693-696 (TGGI), Arg-718, 774-776 (NQW), Ser-814, Tyr-844, and Lys-848.

This sequence belongs to the adenylate-forming reductase family. Mg(2+) is required as a cofactor.

It catalyses the reaction an aromatic aldehyde + AMP + diphosphate + NADP(+) = an aromatic carboxylate + ATP + NADPH + H(+). The catalysed reaction is a carboxylate + ATP + NADPH + H(+) = an aldehyde + AMP + diphosphate + NADP(+). It carries out the reaction benzoate + ATP + NADPH + H(+) = benzaldehyde + AMP + diphosphate + NADP(+). The enzyme catalyses (E)-cinnamate + ATP + NADPH + H(+) = (E)-cinnamaldehyde + AMP + diphosphate + NADP(+). It catalyses the reaction piperonylate + ATP + NADPH + H(+) = piperonal + AMP + diphosphate + NADP(+). The catalysed reaction is salicylate + ATP + NADPH + H(+) = salicylaldehyde + AMP + diphosphate + NADP(+). It carries out the reaction 3-hydroxybenzoate + ATP + NADPH + H(+) = 3-hydroxybenzaldehyde + AMP + diphosphate + NADP(+). The enzyme catalyses 2-methoxybenzoate + ATP + NADPH + H(+) = 2-methoxybenzaldehyde + AMP + diphosphate + NADP(+). It catalyses the reaction 3-methoxybenzoate + ATP + NADPH + H(+) = 3-methoxybenzaldehyde + AMP + diphosphate + NADP(+). The catalysed reaction is 4-hydroxybenzoate + ATP + NADPH + H(+) = 4-hydroxybenzaldehyde + AMP + diphosphate + NADP(+). It carries out the reaction 4-methoxybenzoate + ATP + NADPH + H(+) = 4-methoxybenzaldehyde + AMP + diphosphate + NADP(+). The enzyme catalyses 3-phenylpropanoate + ATP + NADPH + H(+) = 3-phenylpropanal + AMP + diphosphate + NADP(+). It catalyses the reaction picolinate + ATP + NADPH + H(+) = picolinal + AMP + diphosphate + NADP(+). The catalysed reaction is propanoate + ATP + NADPH + H(+) = propanal + AMP + diphosphate + NADP(+). It carries out the reaction butanoate + ATP + NADPH + H(+) = butanal + AMP + diphosphate + NADP(+). The enzyme catalyses pentanoate + ATP + NADPH + H(+) = pentanal + AMP + diphosphate + NADP(+). It catalyses the reaction hexanoate + ATP + NADPH + H(+) = hexanal + AMP + diphosphate + NADP(+). The catalysed reaction is heptanoate + ATP + NADPH + H(+) = heptanal + AMP + diphosphate + NADP(+). It carries out the reaction octanoate + ATP + NADPH + H(+) = octanal + AMP + diphosphate + NADP(+). The enzyme catalyses nonanoate + ATP + NADPH + H(+) = nonanal + AMP + diphosphate + NADP(+). Carboxylic acid reductase that shows a broad range of substrate specificity towards aromatic acids, especially to phenyl carboxylic and phenyl acrylic acids, to convert them into their respective aldehydes. Also able to use aliphatic acids as substrates. The protein is Carboxylic acid reductase of Neurospora crassa (strain ATCC 24698 / 74-OR23-1A / CBS 708.71 / DSM 1257 / FGSC 987).